The sequence spans 187 residues: Ribosome-recycling factor (187 aa).

The protein belongs to the RRF family.

The protein resides in the cytoplasm. In terms of biological role, responsible for the release of ribosomes from messenger RNA at the termination of protein biosynthesis. May increase the efficiency of translation by recycling ribosomes from one round of translation to another. The polypeptide is Ribosome-recycling factor (Methylobacterium nodulans (strain LMG 21967 / CNCM I-2342 / ORS 2060)).